A 439-amino-acid polypeptide reads, in one-letter code: Ribosomal protein uS12 methylthiotransferase RimO (439 aa).

Positions 1-117 (MNIGFISLGC…IAGVVNRIAQ (117 aa)) constitute an MTTase N-terminal domain. 6 residues coordinate [4Fe-4S] cluster: C10, C46, C80, C154, C158, and C161. Residues 140–370 (TTPPGSAYLK…LRLQQKITRQ (231 aa)) form the Radical SAM core domain. The TRAM domain maps to 373-439 (LARINTQEKV…RNYDMIGEYQ (67 aa)).

Belongs to the methylthiotransferase family. RimO subfamily. It depends on [4Fe-4S] cluster as a cofactor.

The protein resides in the cytoplasm. It carries out the reaction L-aspartate(89)-[ribosomal protein uS12]-hydrogen + (sulfur carrier)-SH + AH2 + 2 S-adenosyl-L-methionine = 3-methylsulfanyl-L-aspartate(89)-[ribosomal protein uS12]-hydrogen + (sulfur carrier)-H + 5'-deoxyadenosine + L-methionine + A + S-adenosyl-L-homocysteine + 2 H(+). Catalyzes the methylthiolation of an aspartic acid residue of ribosomal protein uS12. The protein is Ribosomal protein uS12 methylthiotransferase RimO of Syntrophomonas wolfei subsp. wolfei (strain DSM 2245B / Goettingen).